Consider the following 340-residue polypeptide: Protein SSUH2 homolog (340 aa).

A compositionally biased stretch (acidic residues) spans 1-11; sequence MDRDPSEEDSM. The tract at residues 1-20 is disordered; it reads MDRDPSEEDSMADLSFEAES.

Widely expressed, with highest levels in the liver, intestine, tongue and underjaw.

The protein resides in the cytoplasm. It is found in the nucleus. In terms of biological role, plays a role in odontogenesis. The protein is Protein SSUH2 homolog of Mus musculus (Mouse).